The primary structure comprises 278 residues: Reaction center protein L chain (278 aa).

A run of 3 helical transmembrane segments spans residues 33–56, 90–118, and 121–146; these read GFFG…GATI, GLWQ…RKLG, and FHIP…ILMG. Residues H159 and H179 each coordinate (7R,8Z)-bacteriochlorophyll b. A helical transmembrane segment spans residues 176–205; that stretch reads NPAHMLAITFFFTNCLALSMHGSLILSVTN. Fe cation is bound at residue H196. F222 contributes to the a ubiquinone binding site. Residues 231-257 traverse the membrane as a helical segment; sequence GALAIHRLGLFLALSAVFWSAVCIVIS. H236 provides a ligand contact to Fe cation.

The protein belongs to the reaction center PufL/M/PsbA/D family. In terms of assembly, reaction center is composed of four bacteriochlorophylls, two bacteriopheophytins, two ubiquinones, one iron, and two highly hydrophobic polypeptide chains (designated L and M).

It localises to the cellular chromatophore membrane. The reaction center is a membrane-bound complex that mediates the initial photochemical event in the electron transfer process of photosynthesis. The polypeptide is Reaction center protein L chain (pufL) (Allochromatium vinosum (strain ATCC 17899 / DSM 180 / NBRC 103801 / NCIMB 10441 / D) (Chromatium vinosum)).